The following is a 101-amino-acid chain: Urease subunit beta (101 aa).

This sequence belongs to the urease beta subunit family. In terms of assembly, heterotrimer of UreA (gamma), UreB (beta) and UreC (alpha) subunits. Three heterotrimers associate to form the active enzyme.

The protein resides in the cytoplasm. The catalysed reaction is urea + 2 H2O + H(+) = hydrogencarbonate + 2 NH4(+). It functions in the pathway nitrogen metabolism; urea degradation; CO(2) and NH(3) from urea (urease route): step 1/1. The polypeptide is Urease subunit beta (Cupriavidus necator (strain ATCC 17699 / DSM 428 / KCTC 22496 / NCIMB 10442 / H16 / Stanier 337) (Ralstonia eutropha)).